The following is a 2648-amino-acid chain: E3 ubiquitin-protein ligase hecd-1 (2648 aa).

ANK repeat units lie at residues 374–403 (VGQS…DVNK) and 405–434 (HKSS…NPDL). Positions 433 to 455 (DLRDEDGKTALDKARERSDDDHN) are enriched in basic and acidic residues. 3 disordered regions span residues 433-494 (DLRD…ELPN), 645-714 (PMEI…KATA), and 1376-1400 (DPPK…ALPP). Polar residues-rich tracts occupy residues 478 to 489 (ASTSKQPGTSTK), 652 to 661 (NQPSSSTAVP), and 670 to 688 (TVPS…NPST). Low complexity-rich tracts occupy residues 696-714 (SSTP…KATA) and 1383-1400 (PAGT…ALPP). Positions 1438–1510 (RSRGSYKISE…NFDIERVTST (73 aa)) constitute an MIB/HERC2 domain. Disordered regions lie at residues 1538–1562 (YTPK…GSSR), 1575–1629 (KNTT…SLQH), 1652–1796 (NQEP…LLGG), and 1811–1836 (ESLS…GKKP). Low complexity-rich tracts occupy residues 1543–1562 (TGGP…GSSR) and 1575–1586 (KNTTPAGTPSSG). Residues 1610 to 1629 (TSGPSVASTGQAASAESLQH) show a composition bias toward polar residues. The span at 1653-1666 (QEPEDEPMGGEESD) shows a compositional bias: acidic residues. The segment covering 1667-1696 (SAASMRSAASSNSQMSMGSSSQQQQQQDSD) has biased composition (low complexity). Acidic residues-rich tracts occupy residues 1736–1746 (TDGDADADETN) and 1756–1783 (DAME…DESS). Residues 1812–1823 (SLSDASSSAKDA) are compositionally biased toward low complexity. In terms of domain architecture, HECT spans 2240–2648 (FHADRKAVLE…AINEKGFHLN (409 aa)). The Glycyl thioester intermediate role is filled by Cys2617.

It belongs to the UPL family. K-HECT subfamily. Expressed in most tissues, including hypodermis, muscle, intestine, vulva, and neurons.

It carries out the reaction S-ubiquitinyl-[E2 ubiquitin-conjugating enzyme]-L-cysteine + [acceptor protein]-L-lysine = [E2 ubiquitin-conjugating enzyme]-L-cysteine + N(6)-ubiquitinyl-[acceptor protein]-L-lysine.. It functions in the pathway protein modification; protein ubiquitination. In terms of biological role, E3 ubiquitin-protein ligase which accepts ubiquitin from an E2 ubiquitin-conjugating enzyme in the form of a thioester and then directly transfers the ubiquitin to targeted substrates. Involved in the ubiquitination and proteasomal-mediated degradation of cytoplasmic and mitochondrial proteins. Positively regulates lin-12 activity in the anchor cell (AC)/vulval precursor (VU) cell fate decision. Negatively regulates glp-1 activity in germline proliferation. May play a role in the formation of fibrous organelles, a hemidesmosome-like structure attaching muscles to the epidermis. Regulates germline DNA double-strand-break repair and apoptosis in response to DNA damage by recruiting E4 ubiquitin-protein ligase ufd-2 to DNA repair foci. The protein is E3 ubiquitin-protein ligase hecd-1 of Caenorhabditis elegans.